Consider the following 346-residue polypeptide: Probable disease resistance protein At5g45440 (346 aa).

One can recognise an NB-ARC domain in the interval 38–116; that stretch reads KQVEDRVETD…AYAPRIWVSM (79 aa). ATP is bound at residue 85–92; it reads GEYGVGKT. The interval 315–346 is disordered; that stretch reads FDDGKANQNGSKDGKTDSVDNPNSEESKTKPL.

Functionally, possible disease resistance protein. In Arabidopsis thaliana (Mouse-ear cress), this protein is Probable disease resistance protein At5g45440.